Here is a 248-residue protein sequence, read N- to C-terminus: MEDKKLSSAKPATSSKPAPKAPSTGTKVVTKPASGPRPAFKPGQRKPHASNASNDKVAFEKRNFTSGDKTKKPTDSKNPRFQRNNKDRKFVSEYEEKIVDIARVTKVVKGGRRFSFSAFVVIGNKKGTVGYGHGKANEVPDAIKKAIKDAHNNLVEVPITKGTVPHEVTAKFLASKVLLKSAPKGKGLIASSRVRAVVELAGYTDIVSKTYGSRSAQNVVKSVVKALLNLRTAKQIAEVRDKDVKDLL.

The segment at 1-87 is disordered; it reads MEDKKLSSAK…NPRFQRNNKD (87 aa). Over residues 8-23 the composition is skewed to low complexity; it reads SAKPATSSKPAPKAPS. The span at 57–87 shows a compositional bias: basic and acidic residues; that stretch reads VAFEKRNFTSGDKTKKPTDSKNPRFQRNNKD. One can recognise an S5 DRBM domain in the interval 94–157; it reads YEEKIVDIAR…KDAHNNLVEV (64 aa).

This sequence belongs to the universal ribosomal protein uS5 family. Part of the 30S ribosomal subunit. Contacts proteins S4 and S8.

Its function is as follows. With S4 and S12 plays an important role in translational accuracy. Located at the back of the 30S subunit body where it stabilizes the conformation of the head with respect to the body. The polypeptide is Small ribosomal subunit protein uS5 (Mycoplasmopsis synoviae (strain 53) (Mycoplasma synoviae)).